The primary structure comprises 471 residues: 5-hydroxytryptamine receptor 2B (471 aa).

Residues 1-26 (MFQAAVGPLQTNISLPEETPGLELNW) lie on the Extracellular side of the membrane. The N-linked (GlcNAc...) asparagine glycan is linked to N12. Residues 27–49 (AALLIVMVIIPTIGGNILVILAV) form a helical membrane-spanning segment. Topologically, residues 50 to 60 (WLEKKLQNATN) are cytoplasmic. The chain crosses the membrane as a helical span at residues 61–83 (FFLMSLAVADLLVGLLVMPIALI). The Extracellular portion of the chain corresponds to 84–99 (TILYDSDWPLPEPLCP). C98 and C182 are oxidised to a cystine. Residues 100–121 (IWLFLDVLFSTASIMHLCAISL) form a helical membrane-spanning segment. The ergotamine site is built by D105 and T110. A DRY motif; important for ligand-induced conformation changes motif is present at residues 122 to 124 (DRY). At 122 to 141 (DRYIAIKKPIQHSQYKSRAK) the chain is on the cytoplasmic side. A helical membrane pass occupies residues 142-162 (VMLKIALVWLISICIAIPIPI). Topologically, residues 163-191 (KGLRNYPHPNNITFTSNHTCVLKTDTFQE) are extracellular. Residues N173 and N179 are each glycosylated (N-linked (GlcNAc...) asparagine). Position 184 (L184) interacts with ergotamine. Positions 187–190 (DTFQ) match the [DE]RFG motif; may stabilize a conformation that preferentially activates signaling via beta-arrestin family members motif. The helical transmembrane segment at 192–214 (FIIFGSLVAFFIPLTIMMIIYFL) threads the bilayer. Over 215–308 (TVRVLRKKVY…TLTNEQRASK (94 aa)) the chain is Cytoplasmic. The chain crosses the membrane as a helical span at residues 309 to 329 (VLGIVFLLFVVMWCPFFITNI). Over 330 to 344 (TSALCGPCDANIIGR) the chain is Extracellular. C334 and C337 are oxidised to a cystine. Residues 345–366 (LMEIFSWVGYVSSGINPLVYTL) form a helical membrane-spanning segment. Residues 360 to 364 (NPLVY) carry the NPxxY motif; important for ligand-induced conformation changes and signaling motif. At 367-471 (FNKTFRQAFT…CKQEERVSCV (105 aa)) the chain is on the cytoplasmic side. C381 is lipidated: S-palmitoyl cysteine. A PDZ-binding motif is present at residues 469-471 (SCV).

Belongs to the G-protein coupled receptor 1 family. In terms of tissue distribution, detected in brain, heart and gut.

It localises to the cell membrane. Its subcellular location is the synapse. The protein resides in the synaptosome. In terms of biological role, G-protein coupled receptor for 5-hydroxytryptamine (serotonin). Also functions as a receptor for various ergot alkaloid derivatives and psychoactive substances. Ligand binding causes a conformation change that triggers signaling via guanine nucleotide-binding proteins (G proteins) and modulates the activity of downstream effectors. HTR2B is coupled to G(q)/G(11) G alpha proteins and activates phospholipase C-beta, releasing diacylglycerol (DAG) and inositol 1,4,5-trisphosphate (IP3) second messengers that modulate the activity of phosphatidylinositol 3-kinase and promote the release of Ca(2+) ions from intracellular stores, respectively. Beta-arrestin family members inhibit signaling via G proteins and mediate activation of alternative signaling pathways. Plays a role in the regulation of dopamine and 5-hydroxytryptamine release, 5-hydroxytryptamine uptake and in the regulation of extracellular dopamine and 5-hydroxytryptamine levels, and thereby affects neural activity. The protein is 5-hydroxytryptamine receptor 2B (htr2b) of Dichotomyctere fluviatilis (Green pufferfish).